The chain runs to 301 residues: HTH-type transcriptional regulator MtrA (301 aa).

The 102-residue stretch at 196–297 (KRLGHLIQKV…HVSPGQYRKE (102 aa)) folds into the HTH araC/xylS-type domain. 2 DNA-binding regions (H-T-H motif) span residues 216–237 (DKMV…KSQV) and 264–287 (VLEV…KRQY).

With respect to regulation, the affinity for the mtrCDE promoter increases 2-fold in the presence of TX-100, a known effector and substrate of the MtrCDE pump. Involved in the induction of the mtrCDE-encoded efflux pump. Binds specifically to the mtrCDE promoter region. Required for high-level inducible resistance to the detergent Triton X-100 (TX-100) and the spermicide nonoxynol-9 (N-9). In Neisseria gonorrhoeae, this protein is HTH-type transcriptional regulator MtrA.